A 232-amino-acid polypeptide reads, in one-letter code: Aprataxin-like protein (232 aa).

The HIT domain occupies 38–160; sequence LKVYIESPES…MTLDHVSPSL (123 aa). Interaction with DNA stretches follow at residues 63–67, 138–149, and 161–165; these read DMFPK, HAGPSMNNLHLH, and KNSAH. His147 acts as the Nucleophile in catalysis. The Zn(2+) site is built by Cys200 and Cys203. Positions 209–212 are interaction with DNA; sequence RHFT. Residues His217 and Glu221 each contribute to the Zn(2+) site.

In terms of assembly, monomer.

It localises to the nucleus. Its subcellular location is the cytoplasm. The catalysed reaction is a 5'-end adenosine-5'-diphospho-5'-2'-deoxyribonucleoside-DNA + H2O = a 5'-end 5'-phospho-2'-deoxyribonucleoside-DNA + AMP + 2 H(+). The enzyme catalyses a 5'-end adenosine-5'-diphospho-5'-ribonucleoside-2'-deoxyribonucleotide-DNA + H2O = a 5'-end 5'-phospho-ribonucleoside-2'-deoxyribonucleotide-DNA + AMP + 2 H(+). It catalyses the reaction a 3'-end 2'-deoxyribonucleotide-3'-diphospho-5'-guanosine-DNA + H2O = a 3'-end 2'-deoxyribonucleotide 3'-phosphate-DNA + GMP + 2 H(+). Its function is as follows. DNA-binding protein involved in single-strand DNA break repair, double-strand DNA break repair and base excision repair. Resolves abortive DNA ligation intermediates formed either at base excision sites, or when DNA ligases attempt to repair non-ligatable breaks induced by reactive oxygen species. Catalyzes the release of adenylate groups covalently linked to 5'-phosphate termini, resulting in the production of 5'-phosphate termini that can be efficiently rejoined. Likewise, catalyzes the release of 3'-linked guanosine (DNAppG) and inosine (DNAppI) from DNA, but has higher specific activity with 5'-linked adenosine (AppDNA). The chain is Aprataxin-like protein (hnt3) from Schizosaccharomyces pombe (strain 972 / ATCC 24843) (Fission yeast).